Consider the following 350-residue polypeptide: Transcription factor MYB102 (350 aa).

2 consecutive HTH myb-type domains span residues 9–65 and 66–116; these read KNGL…RPDI and KRGR…RKKL. 2 consecutive DNA-binding regions (H-T-H motif) follow at residues 37-61 and 89-112; these read WRTL…TNYL and WSAI…NTHI.

In terms of tissue distribution, expressed in rosette leaves, cauline leaves and flowers.

Its subcellular location is the nucleus. Its function is as follows. Probable transcription factor that may function in osmotic stress and wounding signaling pathways. Contributes to basal resistance against the herbivore Pieris rapae (white cabbage butterfly) feeding. This Arabidopsis thaliana (Mouse-ear cress) protein is Transcription factor MYB102.